The primary structure comprises 461 residues: Protein YIG1 (461 aa).

The disordered stretch occupies residues 58–80 (SNVGEDGGDVGNYSEEDDDGDEE). Acidic residues predominate over residues 71-80 (SEEDDDGDEE).

The protein localises to the cytoplasm. It localises to the nucleus. In terms of biological role, involved in the regulation of anaerobiotic glycerol metabolism. In Saccharomyces cerevisiae (strain ATCC 204508 / S288c) (Baker's yeast), this protein is Protein YIG1 (YIG1).